The chain runs to 686 residues: Probable metal-nicotianamine transporter YSL10 (686 aa).

14 helical membrane passes run 36-56, 60-80, 109-129, 151-171, 212-232, 271-291, 316-336, 383-403, 415-435, 461-481, 501-521, 556-576, 597-617, and 639-659; these read VTLRALAVSALLGAMFSVIVM, LTTGIIPSLNVSAGLLGFFLL, CVVACSGIAFSGGFGSYIFAM, LGWMIGFLFIVSFLGLFSVVP, MLGKFFVMSFSWGFFQWFYTG, LVNISVLLGGVMSWGIMWPLI, VFISISLILGDGLYNFLKVMT, IPNWLALSAYVVIAVVSIATV, VAVSYVVAPVLAFCNAYGCGL, GGIIAGLAACGVMIGIVSTAS, FVSQVIGTAMGCVIAPSVFWL, GSLPKHCLDLCIGFFVAAIAV, MAIPFYLGPYFGIDMCIGSLI, and GLICGDGIWTLPQSVLALAGV.

The protein belongs to the YSL (TC 2.A.67.2) family.

It is found in the membrane. In terms of biological role, may be involved in the transport of nicotianamine-chelated metals. The protein is Probable metal-nicotianamine transporter YSL10 (YSL10) of Oryza sativa subsp. japonica (Rice).